The primary structure comprises 122 residues: Large ribosomal subunit protein uL14 (122 aa).

It belongs to the universal ribosomal protein uL14 family. In terms of assembly, part of the 50S ribosomal subunit. Forms a cluster with proteins L3 and L19. In the 70S ribosome, L14 and L19 interact and together make contacts with the 16S rRNA in bridges B5 and B8.

Its function is as follows. Binds to 23S rRNA. Forms part of two intersubunit bridges in the 70S ribosome. In Bifidobacterium adolescentis (strain ATCC 15703 / DSM 20083 / NCTC 11814 / E194a), this protein is Large ribosomal subunit protein uL14.